Reading from the N-terminus, the 150-residue chain is Troponin C, isoform 1 (150 aa).

M1 bears the N-acetylmethionine mark. 4 consecutive EF-hand domains span residues 7 to 42 (DQVQ…MGVK), 43 to 78 (ISDR…FLSE), 83 to 118 (ALKK…LDNK), and 119 to 150 (LTED…MMNG). Ca(2+)-binding residues include D56, D58, S60, E62, and E67. Ca(2+) contacts are provided by D132, D134, S136, T138, and E143.

The protein belongs to the troponin C family.

Functionally, troponin is the central regulatory protein of striated muscle contraction. Tn consists of three components: Tn-I which is the inhibitor of actomyosin ATPase, Tn-T which contains the binding site for tropomyosin and Tn-C. The binding of calcium to Tn-C abolishes the inhibitory action of Tn on actin filaments. This is Troponin C, isoform 1 from Homarus americanus (American lobster).